The chain runs to 183 residues: Large ribosomal subunit protein uL10 (183 aa).

It belongs to the universal ribosomal protein uL10 family. As to quaternary structure, part of the ribosomal stalk of the 50S ribosomal subunit. The N-terminus interacts with L11 and the large rRNA to form the base of the stalk. The C-terminus forms an elongated spine to which L12 dimers bind in a sequential fashion forming a multimeric L10(L12)X complex.

Forms part of the ribosomal stalk, playing a central role in the interaction of the ribosome with GTP-bound translation factors. In Mesomycoplasma hyopneumoniae (strain 232) (Mycoplasma hyopneumoniae), this protein is Large ribosomal subunit protein uL10.